The following is a 457-amino-acid chain: tRNA-2-methylthio-N(6)-dimethylallyladenosine synthase (457 aa).

The region spanning 3–120 (KKVYVKTFGC…LPQMIDARRE (118 aa)) is the MTTase N-terminal domain. [4Fe-4S] cluster-binding residues include C12, C49, C83, C157, C161, and C164. A Radical SAM core domain is found at 143 to 377 (RVEGPSAFVS…QATIEENVAR (235 aa)). Positions 380-447 (QSMVGKVERI…PHSLRGELVL (68 aa)) constitute a TRAM domain.

It belongs to the methylthiotransferase family. MiaB subfamily. In terms of assembly, monomer. [4Fe-4S] cluster serves as cofactor.

The protein localises to the cytoplasm. It catalyses the reaction N(6)-dimethylallyladenosine(37) in tRNA + (sulfur carrier)-SH + AH2 + 2 S-adenosyl-L-methionine = 2-methylsulfanyl-N(6)-dimethylallyladenosine(37) in tRNA + (sulfur carrier)-H + 5'-deoxyadenosine + L-methionine + A + S-adenosyl-L-homocysteine + 2 H(+). Functionally, catalyzes the methylthiolation of N6-(dimethylallyl)adenosine (i(6)A), leading to the formation of 2-methylthio-N6-(dimethylallyl)adenosine (ms(2)i(6)A) at position 37 in tRNAs that read codons beginning with uridine. This is tRNA-2-methylthio-N(6)-dimethylallyladenosine synthase from Burkholderia lata (strain ATCC 17760 / DSM 23089 / LMG 22485 / NCIMB 9086 / R18194 / 383).